Consider the following 138-residue polypeptide: uncharacterized protein (138 aa).

The helical transmembrane segment at 11 to 33 (ILLGLTLSLTFLYPLIITLIILY) threads the bilayer.

The protein resides in the membrane. This is an uncharacterized protein from Aquifex aeolicus (strain VF5).